The chain runs to 166 residues: Outer membrane protein assembly factor BamE (166 aa).

A signal peptide spans 1 to 18 (MKRTVFPLAVAAALTLTA). Cys-19 carries N-palmitoyl cysteine lipidation. Residue Cys-19 is the site of S-diacylglycerol cysteine attachment. Residues 143-166 (LFSNDDSGEMPVKPESKPSDLLNE) are disordered.

Belongs to the BamE family. In terms of assembly, part of the Bam complex.

The protein localises to the cell outer membrane. In terms of biological role, part of the outer membrane protein assembly complex, which is involved in assembly and insertion of beta-barrel proteins into the outer membrane. This Methylomonas methanica (strain DSM 25384 / MC09) protein is Outer membrane protein assembly factor BamE.